Consider the following 180-residue polypeptide: Trafficking protein particle complex subunit 3 (180 aa).

Cysteine 68 carries S-palmitoyl cysteine lipidation.

This sequence belongs to the TRAPP small subunits family. BET3 subfamily. As to quaternary structure, homodimer. Part of the multisubunit TRAPP (transport protein particle) complex.

Its subcellular location is the golgi apparatus. It is found in the cis-Golgi network. The protein localises to the endoplasmic reticulum. Its function is as follows. May play a role in vesicular transport from endoplasmic reticulum to Golgi. The sequence is that of Trafficking protein particle complex subunit 3 (TRAPPC3) from Gallus gallus (Chicken).